Consider the following 652-residue polypeptide: Protein phosphatase Slingshot homolog 3 (652 aa).

A compositionally biased stretch (polar residues) spans 1–16; that stretch reads MALVTVSRSPPASGHS. Residues 1 to 31 form a disordered region; the sequence is MALVTVSRSPPASGHSTPVGPTDRVIRRRGR. Alanine 2 carries the post-translational modification N-acetylalanine. 4 positions are modified to phosphoserine: serine 9, serine 37, serine 85, and serine 87. The interval 43 to 91 is disordered; the sequence is GAVLGLQDGGEGNDAAEADPEPMEKPSGEEQPAEDQTDNGQGSQSPWKQ. Residues 80-90 show a composition bias toward polar residues; sequence DNGQGSQSPWK. A DEK-C domain is found at 266-321; that stretch reads EQMEQAILAELWQVLDASDLDSVTSKEIRQALELRLGCPLQQYRDFIDNQMLLLMA. Positions 325–466 constitute a Tyrosine-protein phosphatase domain; the sequence is RASRIFPHLY…LQTYQGILTA (142 aa). The Phosphocysteine intermediate role is filled by cysteine 410. Disordered stretches follow at residues 484–526, 540–580, and 610–652; these read EPLA…LGLR, LLEP…KGGQ, and RAFQ…EGKA. The span at 540-552 shows a compositional bias: low complexity; sequence LLEPSSEPESTTE. The segment covering 642-652 has biased composition (basic and acidic residues); sequence SVDDSREEGKA.

Belongs to the protein-tyrosine phosphatase family. In terms of assembly, does not bind to, or colocalize with, filamentous actin.

It localises to the cytoplasm. The protein resides in the cytoskeleton. The protein localises to the nucleus. The enzyme catalyses O-phospho-L-tyrosyl-[protein] + H2O = L-tyrosyl-[protein] + phosphate. It catalyses the reaction O-phospho-L-seryl-[protein] + H2O = L-seryl-[protein] + phosphate. The catalysed reaction is O-phospho-L-threonyl-[protein] + H2O = L-threonyl-[protein] + phosphate. In terms of biological role, protein phosphatase which may play a role in the regulation of actin filament dynamics. Can dephosphorylate and activate the actin binding/depolymerizing factor cofilin, which subsequently binds to actin filaments and stimulates their disassembly. In Rattus norvegicus (Rat), this protein is Protein phosphatase Slingshot homolog 3 (Ssh3).